A 484-amino-acid chain; its full sequence is MKFIIKLFPEIMIKSDSVRKRFIKILTSNIRNVLLRETEQVAVVRNWDFIEVRAKVAEEIPLILDLLKRTPGIHHILEVQEMPFTSLHDIFEHTFAKYQNQLVDKTFCVRVRRKGKHEFSSLDVEKYVGGGLNQRIESARVKLTKPDVTVRIDINGDKMLLVEARHEGLGGYPIGTQEDVLSLISGGFDSGVSSYMFIRRGSRVHYCFFNLGGASHEIGVKQMAYHIWSRYSTSHKVRFVAINFESVVGEILEKVDNGQMGVVLKRMMVRAASQIAERFAIQAIVTGEALGQVSSQTLTNLRLIDKAADSLVLRPLITHDKEKIIALAKQIGTDDIAKSMPEFCGVISKNPTVKAIESKIVEEEGHFDFDVLEKAVQNATYLDIREIALQTEKDVVAVEATSALTEKDIILDIRSPEEMDEKPLVLAQAQVIELPFYKLSTQFAHLDQSKNYLLYCERGVMSKLQALYLKEKGYQNVKVFNLPK.

A THUMP domain is found at 61 to 165 (PLILDLLKRT…GDKMLLVEAR (105 aa)). Residues 183–184 (LI), K265, G287, and Q296 contribute to the ATP site. A disulfide bond links C344 and C456. Residues 404–483 (LTEKDIILDI…YQNVKVFNLP (80 aa)) form the Rhodanese domain. The active-site Cysteine persulfide intermediate is the C456.

The protein belongs to the ThiI family.

It is found in the cytoplasm. The enzyme catalyses [ThiI sulfur-carrier protein]-S-sulfanyl-L-cysteine + a uridine in tRNA + 2 reduced [2Fe-2S]-[ferredoxin] + ATP + H(+) = [ThiI sulfur-carrier protein]-L-cysteine + a 4-thiouridine in tRNA + 2 oxidized [2Fe-2S]-[ferredoxin] + AMP + diphosphate. It catalyses the reaction [ThiS sulfur-carrier protein]-C-terminal Gly-Gly-AMP + S-sulfanyl-L-cysteinyl-[cysteine desulfurase] + AH2 = [ThiS sulfur-carrier protein]-C-terminal-Gly-aminoethanethioate + L-cysteinyl-[cysteine desulfurase] + A + AMP + 2 H(+). It functions in the pathway cofactor biosynthesis; thiamine diphosphate biosynthesis. Functionally, catalyzes the ATP-dependent transfer of a sulfur to tRNA to produce 4-thiouridine in position 8 of tRNAs, which functions as a near-UV photosensor. Also catalyzes the transfer of sulfur to the sulfur carrier protein ThiS, forming ThiS-thiocarboxylate. This is a step in the synthesis of thiazole, in the thiamine biosynthesis pathway. The sulfur is donated as persulfide by IscS. This is tRNA sulfurtransferase from Haemophilus ducreyi (strain 35000HP / ATCC 700724).